We begin with the raw amino-acid sequence, 147 residues long: Orcokinin peptides (147 aa).

The first 27 residues, 1–27, serve as a signal peptide directing secretion; sequence MPRHSVFALSILALSITATVWIPTVQA. 2 consecutive propeptides follow at residues 28 to 89 and 146 to 147; these read ETNL…ERFG and FG.

This sequence belongs to the orcokinin family.

The protein localises to the secreted. Myotropic peptides. The polypeptide is Orcokinin peptides (Apis mellifera (Honeybee)).